The sequence spans 307 residues: Olfactory receptor 8K5 (307 aa).

Residues 1–25 (MGQHNLTVLTEFILMELTRRPELQI) are Extracellular-facing. N-linked (GlcNAc...) asparagine glycosylation is present at N5. The chain crosses the membrane as a helical span at residues 26–46 (PLFGVFLVIYLITVVGNLTMI). The Cytoplasmic portion of the chain corresponds to 47 to 54 (ILTKLDSH). A helical membrane pass occupies residues 55–75 (LHTPMYFSIRHLAFVDLGNST). At 76–99 (VICPKVLANFVVDRNTISYYACAA) the chain is on the extracellular side. C97 and C189 are joined by a disulfide. The chain crosses the membrane as a helical span at residues 100–120 (QLAFFLMFIISEFFILSAMAY). The Cytoplasmic segment spans residues 121–139 (DRYVAICNPLLYYVIMSQR). Residues 140–160 (LCHVLVGIQYLYSTFQALMFT) form a helical membrane-spanning segment. Over 161–197 (IKIFTLTFCGSNVISHFYCDDVPLLPMLCSNAQEIEL) the chain is Extracellular. Residues 198 to 217 (LSILFSVFNLISSFLIVLVS) traverse the membrane as a helical segment. Residues 218 to 237 (YMLILLAICQMHSAEGRKKA) are Cytoplasmic-facing. A helical membrane pass occupies residues 238–258 (FSTCGSHLTVVVVFYGSLLFM). Topologically, residues 259 to 271 (YMQPNSTHFFDTD) are extracellular. An N-linked (GlcNAc...) asparagine glycan is attached at N263. The chain crosses the membrane as a helical span at residues 272–292 (KMASVFYTLVIPMLNPLIYSL). At 293 to 307 (RNEEVKNAFYKLFEN) the chain is on the cytoplasmic side.

Belongs to the G-protein coupled receptor 1 family.

The protein localises to the cell membrane. Functionally, odorant receptor. This Homo sapiens (Human) protein is Olfactory receptor 8K5 (OR8K5).